Here is a 138-residue protein sequence, read N- to C-terminus: ATP synthase epsilon chain (138 aa).

This sequence belongs to the ATPase epsilon chain family. In terms of assembly, F-type ATPases have 2 components, CF(1) - the catalytic core - and CF(0) - the membrane proton channel. CF(1) has five subunits: alpha(3), beta(3), gamma(1), delta(1), epsilon(1). CF(0) has three main subunits: a, b and c.

The protein resides in the cell inner membrane. Functionally, produces ATP from ADP in the presence of a proton gradient across the membrane. In Polynucleobacter necessarius subsp. necessarius (strain STIR1), this protein is ATP synthase epsilon chain.